We begin with the raw amino-acid sequence, 185 residues long: MNNETIAKAKRNMNKSIEVYQSNLATVRAGVANASLLDRVMVEYYGVPTPLVQMAGITIPEPRVLMITPYDKTSLNDIEHAILASDLGLTPANDGNVIRLIIPQLTGERRQEIAKEVGKLAEEAKIAVRNVRQEAMKALKKQEKDGEITEDEERRLEKEVQKVTDESTKKIDQMADNKRKEIIQG.

The interval 138-185 is disordered; the sequence is ALKKQEKDGEITEDEERRLEKEVQKVTDESTKKIDQMADNKRKEIIQG.

Belongs to the RRF family.

The protein resides in the cytoplasm. In terms of biological role, responsible for the release of ribosomes from messenger RNA at the termination of protein biosynthesis. May increase the efficiency of translation by recycling ribosomes from one round of translation to another. The chain is Ribosome-recycling factor from Lactobacillus delbrueckii subsp. bulgaricus (strain ATCC 11842 / DSM 20081 / BCRC 10696 / JCM 1002 / NBRC 13953 / NCIMB 11778 / NCTC 12712 / WDCM 00102 / Lb 14).